The following is a 1423-amino-acid chain: DNA-directed RNA polymerase subunit beta' (1423 aa).

Zn(2+) is bound by residues Cys71, Cys73, Cys86, and Cys89. Residues Asp461, Asp463, and Asp465 each contribute to the Mg(2+) site. Cys815, Cys889, Cys896, and Cys899 together coordinate Zn(2+).

The protein belongs to the RNA polymerase beta' chain family. In terms of assembly, the RNAP catalytic core consists of 2 alpha, 1 beta, 1 beta' and 1 omega subunit. When a sigma factor is associated with the core the holoenzyme is formed, which can initiate transcription. The cofactor is Mg(2+). Zn(2+) is required as a cofactor.

It carries out the reaction RNA(n) + a ribonucleoside 5'-triphosphate = RNA(n+1) + diphosphate. Functionally, DNA-dependent RNA polymerase catalyzes the transcription of DNA into RNA using the four ribonucleoside triphosphates as substrates. This is DNA-directed RNA polymerase subunit beta' from Actinobacillus pleuropneumoniae serotype 3 (strain JL03).